A 207-amino-acid chain; its full sequence is Large ribosomal subunit protein bL25 (207 aa).

Residues 171-207 form a disordered region; that stretch reads EEETVVTVSAPRAEEEPTTTEAPEPEAVHGNDEEPVE. The segment covering 196-207 has biased composition (basic and acidic residues); that stretch reads EAVHGNDEEPVE.

The protein belongs to the bacterial ribosomal protein bL25 family. CTC subfamily. In terms of assembly, part of the 50S ribosomal subunit; part of the 5S rRNA/L5/L18/L25 subcomplex. Contacts the 5S rRNA. Binds to the 5S rRNA independently of L5 and L18.

Its function is as follows. This is one of the proteins that binds to the 5S RNA in the ribosome where it forms part of the central protuberance. In Listeria innocua serovar 6a (strain ATCC BAA-680 / CLIP 11262), this protein is Large ribosomal subunit protein bL25.